Here is a 287-residue protein sequence, read N- to C-terminus: 4-diphosphocytidyl-2-C-methyl-D-erythritol kinase (287 aa).

The active site involves lysine 12. Residue 95-105 coordinates ATP; the sequence is PAQAGMGGGSS. The active site involves aspartate 137.

Belongs to the GHMP kinase family. IspE subfamily.

It catalyses the reaction 4-CDP-2-C-methyl-D-erythritol + ATP = 4-CDP-2-C-methyl-D-erythritol 2-phosphate + ADP + H(+). It participates in isoprenoid biosynthesis; isopentenyl diphosphate biosynthesis via DXP pathway; isopentenyl diphosphate from 1-deoxy-D-xylulose 5-phosphate: step 3/6. Catalyzes the phosphorylation of the position 2 hydroxy group of 4-diphosphocytidyl-2C-methyl-D-erythritol. The polypeptide is 4-diphosphocytidyl-2-C-methyl-D-erythritol kinase (Delftia acidovorans (strain DSM 14801 / SPH-1)).